A 344-amino-acid polypeptide reads, in one-letter code: Holliday junction branch migration complex subunit RuvB (344 aa).

Residues 1-180 are large ATPase domain (RuvB-L); sequence MSRIVSGEAQ…FGIPVRLEFY (180 aa). 9 residues coordinate ATP: Leu-19, Arg-20, Gly-61, Lys-64, Thr-65, Thr-66, Arg-170, Tyr-180, and Arg-217. A Mg(2+)-binding site is contributed by Thr-65. The small ATPAse domain (RuvB-S) stretch occupies residues 181–251; that stretch reads THDELARVLL…AAAAALARLD (71 aa). The segment at 254 to 344 is head domain (RuvB-H); sequence EVGLDALDRR…AAPPADLFDK (91 aa). The DNA site is built by Arg-290, Arg-309, and Arg-314.

It belongs to the RuvB family. As to quaternary structure, homohexamer. Forms an RuvA(8)-RuvB(12)-Holliday junction (HJ) complex. HJ DNA is sandwiched between 2 RuvA tetramers; dsDNA enters through RuvA and exits via RuvB. An RuvB hexamer assembles on each DNA strand where it exits the tetramer. Each RuvB hexamer is contacted by two RuvA subunits (via domain III) on 2 adjacent RuvB subunits; this complex drives branch migration. In the full resolvosome a probable DNA-RuvA(4)-RuvB(12)-RuvC(2) complex forms which resolves the HJ.

It localises to the cytoplasm. It carries out the reaction ATP + H2O = ADP + phosphate + H(+). The RuvA-RuvB-RuvC complex processes Holliday junction (HJ) DNA during genetic recombination and DNA repair, while the RuvA-RuvB complex plays an important role in the rescue of blocked DNA replication forks via replication fork reversal (RFR). RuvA specifically binds to HJ cruciform DNA, conferring on it an open structure. The RuvB hexamer acts as an ATP-dependent pump, pulling dsDNA into and through the RuvAB complex. RuvB forms 2 homohexamers on either side of HJ DNA bound by 1 or 2 RuvA tetramers; 4 subunits per hexamer contact DNA at a time. Coordinated motions by a converter formed by DNA-disengaged RuvB subunits stimulates ATP hydrolysis and nucleotide exchange. Immobilization of the converter enables RuvB to convert the ATP-contained energy into a lever motion, pulling 2 nucleotides of DNA out of the RuvA tetramer per ATP hydrolyzed, thus driving DNA branch migration. The RuvB motors rotate together with the DNA substrate, which together with the progressing nucleotide cycle form the mechanistic basis for DNA recombination by continuous HJ branch migration. Branch migration allows RuvC to scan DNA until it finds its consensus sequence, where it cleaves and resolves cruciform DNA. This is Holliday junction branch migration complex subunit RuvB from Phenylobacterium zucineum (strain HLK1).